A 285-amino-acid chain; its full sequence is (3S)-malyl-CoA thioesterase (285 aa).

2 residues coordinate substrate: R70 and E122. Mg(2+) contacts are provided by E122 and D148.

Belongs to the HpcH/HpaI aldolase family. As to quaternary structure, homodimer or homotrimer. Mg(2+) serves as cofactor.

The enzyme catalyses (S)-malyl-CoA + H2O = (S)-malate + CoA + H(+). Functionally, catalyzes the hydrolysis of (3S)-malyl-CoA to (3S)-malate and free CoA. Inactive towards beta-methylmalyl-CoA and other CoA esters. This is (3S)-malyl-CoA thioesterase from Cereibacter sphaeroides (strain ATCC 17029 / ATH 2.4.9) (Rhodobacter sphaeroides).